The primary structure comprises 187 residues: Frequenin-1 (187 aa).

A lipid anchor (N-myristoyl glycine) is attached at Gly2. 4 consecutive EF-hand domains span residues 24-59, 60-95, 96-131, and 143-178; these read EKEIRQWHKGFLKDCPNGLLTEQGFIKIYKQFFPQG, DPSKFASLVFRVFDENNDGSIEFEEFIRALSVTSKG, NLDEKLQWAFRLYDVDNDGYITREEMYNIVDAIYQM, and TPQKRVDKIFDQMDKNHDGKLTLEEFREGSKADPRI. Ca(2+) contacts are provided by Asp73, Asn75, Asp77, Ser79, Glu84, Asp109, Asp111, Asp113, Tyr115, Glu120, Asp156, Asn158, Asp160, Lys162, and Glu167.

Belongs to the recoverin family. In contrast to Frq2, does not interact with ric8a. In terms of tissue distribution, enriched in synapses, such as the motor nerve endings at neuromuscular junctions. In the embryo, highly expressed in the ventral ganglia.

Its subcellular location is the cytoplasm. In terms of biological role, ca(2+)-dependent modulation of synaptic efficacy. Also plays a role in axon terminal morphology. The polypeptide is Frequenin-1 (Frq1) (Drosophila melanogaster (Fruit fly)).